Reading from the N-terminus, the 89-residue chain is U1-hexatoxin-Iw1e (89 aa).

An N-terminal signal peptide occupies residues 1–18 (MLKFVVLIFVVIMASTFA). 5 disulfide bridges follow: Cys21-Cys32, Cys26-Cys40, Cys31-Cys66, Cys50-Cys74, and Cys68-Cys81. A propeptide spanning residues 87 to 89 (RSE) is cleaved from the precursor.

Belongs to the MIT-like AcTx family. In terms of tissue distribution, expressed by the venom gland.

It is found in the secreted. The chain is U1-hexatoxin-Iw1e from Illawarra wisharti (Illawarra funnel-web spider).